A 360-amino-acid chain; its full sequence is Protein Wnt-2 (360 aa).

The signal sequence occupies residues 1–25 (MNAPLGGIWLWLPLLLTWLTPEVSS). 11 disulfides stabilise this stretch: Cys-76-Cys-87, Cys-127-Cys-135, Cys-137-Cys-157, Cys-206-Cys-220, Cys-208-Cys-215, Cys-278-Cys-309, Cys-294-Cys-304, Cys-308-Cys-348, Cys-324-Cys-339, Cys-326-Cys-336, and Cys-331-Cys-332. Ser-212 carries the O-palmitoleoyl serine; by PORCN lipid modification. N-linked (GlcNAc...) asparagine glycosylation is present at Asn-295.

This sequence belongs to the Wnt family. In terms of processing, palmitoleoylation is required for efficient binding to frizzled receptors. Depalmitoleoylation leads to Wnt signaling pathway inhibition.

Its subcellular location is the secreted. The protein resides in the extracellular space. The protein localises to the extracellular matrix. In terms of biological role, ligand for members of the frizzled family of seven transmembrane receptors. Functions in the canonical Wnt signaling pathway that results in activation of transcription factors of the TCF/LEF family. Functions as a upstream regulator of FGF10 expression. Plays an important role in embryonic lung development. May contribute to embryonic brain development by regulating the proliferation of dopaminergic precursors and neurons. This is Protein Wnt-2 (WNT2) from Equus caballus (Horse).